The primary structure comprises 146 residues: Hemoglobin subunit beta (146 aa).

At Val1 the chain carries N-acetylvaline. The Globin domain maps to 2 to 146 (HLTDGEKNAL…VANALAHKYH (145 aa)). Ser44 bears the Phosphoserine mark. Lys59 carries the post-translational modification N6-acetyllysine. His63 provides a ligand contact to heme b. N6-acetyllysine is present on Lys82. His92 contributes to the heme b binding site. Cys93 carries the S-nitrosocysteine modification. Residue Lys144 is modified to N6-acetyllysine.

Belongs to the globin family. Heterotetramer of two alpha chains and two beta chains. As to expression, red blood cells.

Its function is as follows. Involved in oxygen transport from the lung to the various peripheral tissues. The polypeptide is Hemoglobin subunit beta (Otospermophilus beecheyi (California ground squirrel)).